The sequence spans 437 residues: Ribosomal protein uS12 methylthiotransferase RimO (437 aa).

The MTTase N-terminal domain occupies 3–118 (KKFYITTLGC…AGKILREKFP (116 aa)). Cys-12, Cys-48, Cys-81, Cys-157, Cys-161, and Cys-164 together coordinate [4Fe-4S] cluster. The Radical SAM core domain maps to 143–370 (NYSKPYAYVK…RDSHLEILEE (228 aa)). The 65-residue stretch at 373-437 (ESRIGRTYDA…YEYDMNGTWV (65 aa)) folds into the TRAM domain.

Belongs to the methylthiotransferase family. RimO subfamily. It depends on [4Fe-4S] cluster as a cofactor.

It localises to the cytoplasm. The catalysed reaction is L-aspartate(89)-[ribosomal protein uS12]-hydrogen + (sulfur carrier)-SH + AH2 + 2 S-adenosyl-L-methionine = 3-methylsulfanyl-L-aspartate(89)-[ribosomal protein uS12]-hydrogen + (sulfur carrier)-H + 5'-deoxyadenosine + L-methionine + A + S-adenosyl-L-homocysteine + 2 H(+). Catalyzes the methylthiolation of an aspartic acid residue of ribosomal protein uS12. The polypeptide is Ribosomal protein uS12 methylthiotransferase RimO (Leptospira interrogans serogroup Icterohaemorrhagiae serovar copenhageni (strain Fiocruz L1-130)).